The primary structure comprises 724 residues: Catalase-peroxidase (724 aa).

The segment at residues 98-226 is a cross-link (tryptophyl-tyrosyl-methioninium (Trp-Tyr) (with M-252)); the sequence is WHSAGSYRLA…LAAVQMGLIY (129 aa). His99 serves as the catalytic Proton acceptor. Residues 226–252 constitute a cross-link (tryptophyl-tyrosyl-methioninium (Tyr-Met) (with W-98)); the sequence is YVNPEGVNGKPDPLKTAAQVRTTFARM. Position 267 (His267) interacts with heme b.

Belongs to the peroxidase family. Peroxidase/catalase subfamily. In terms of assembly, homodimer or homotetramer. Heme b serves as cofactor. Post-translationally, formation of the three residue Trp-Tyr-Met cross-link is important for the catalase, but not the peroxidase activity of the enzyme.

The enzyme catalyses H2O2 + AH2 = A + 2 H2O. It carries out the reaction 2 H2O2 = O2 + 2 H2O. Bifunctional enzyme with both catalase and broad-spectrum peroxidase activity. The chain is Catalase-peroxidase from Maricaulis maris (strain MCS10) (Caulobacter maris).